We begin with the raw amino-acid sequence, 1201 residues long: Vitamin B12-dependent ribonucleotide reductase (1201 aa).

Substrate is bound by residues Ser153, 198-199 (AC), Gly230, 482-486 (NPCSE), and 683-687 (PTGTI). A disulfide bridge connects residues Cys199 and Cys495. Residue Asn482 is the Proton acceptor of the active site. Cys484 functions as the Cysteine radical intermediate in the catalytic mechanism. Catalysis depends on Glu486, which acts as the Proton acceptor. Residues 1100–1118 (DEIGSKRATAESNGQEKET) show a composition bias toward basic and acidic residues. Positions 1100-1120 (DEIGSKRATAESNGQEKETLS) are disordered.

Belongs to the ribonucleoside diphosphate reductase class-2 family. The cofactor is adenosylcob(III)alamin.

The catalysed reaction is a 2'-deoxyribonucleoside 5'-diphosphate + [thioredoxin]-disulfide + H2O = a ribonucleoside 5'-diphosphate + [thioredoxin]-dithiol. Catalyzes the reduction of ribonucleotides to deoxyribonucleotides. May function to provide a pool of deoxyribonucleotide precursors for DNA repair during oxygen limitation and/or for immediate growth after restoration of oxygen. This chain is Vitamin B12-dependent ribonucleotide reductase (nrdJ), found in Leptospira interrogans serogroup Icterohaemorrhagiae serovar copenhageni (strain Fiocruz L1-130).